The chain runs to 382 residues: Toluene efflux pump periplasmic linker protein TtgD (382 aa).

Positions 1-23 are cleaved as a signal peptide; that stretch reads MRLERALRARQLIPLAAIWLLVG. Cysteine 24 carries N-palmitoyl cysteine lipidation. Cysteine 24 carries the S-diacylglycerol cysteine lipid modification. Residues 100 to 136 adopt a coiled-coil conformation; it reads YEALLARAEASLLTAQNLARRYERLLDTNAISQQQYD.

The protein belongs to the membrane fusion protein (MFP) (TC 8.A.1) family.

Its subcellular location is the cell inner membrane. Its function is as follows. The periplasmic linker protein component of an inducible organic solvent efflux pump. Involved in export of toluene and styrene but not of m-xylene, propylbenzene or ethylbenzene. Is not involved in antibiotic or AMP efflux. In Pseudomonas putida (strain DOT-T1E), this protein is Toluene efflux pump periplasmic linker protein TtgD (ttgD).